Here is a 2113-residue protein sequence, read N- to C-terminus: Ninein (2113 aa).

EF-hand domains lie at Gln-8–Glu-43 and Leu-42–Arg-77. Ser-152 is subject to Phosphoserine. 2 EF-hand domains span residues Trp-182–Gln-217 and Val-219–Ser-252. Gly-245–Ser-252 serves as a coordination point for GTP. Phosphoserine is present on Ser-269. Asp-300–Gln-304 provides a ligand contact to GTP. The EF-hand 5 domain maps to Glu-317 to Val-352. Residues His-358–Leu-570 are a coiled coil. Arg-420 to Asp-423 lines the GTP pocket. The tract at residues Glu-578–Asn-599 is disordered. Coiled-coil stretches lie at residues Arg-620–His-926, Glu-958–Ile-1008, Glu-1175–Val-1323, and Ala-1425–Asp-1806. Residues Glu-798 to Met-1495 form an important for interaction with CEP170 region. 2 positions are modified to phosphoserine: Ser-1540 and Ser-1826. 2 coiled-coil regions span residues Val-1852–Ser-1910 and Arg-1971–Leu-2093. Disordered regions lie at residues Lys-1899 to Leu-1922 and Ser-1988 to Asn-2008. The segment covering Ser-1988 to Thr-1999 has biased composition (basic and acidic residues).

In terms of assembly, homooligomer. Interacts with GSK3B/GSK3-beta via its C-terminal domain. Interacts with C14ORF166, such interaction may prevent its phosphorylation by GSK3B. Interacts with AUNIP (via N-terminus). Identified in a complex with AUNIP and AURKA. Interacts with CCDC120. Interacts (via C-terminus) with CEP250. Interacts with CEP170. Interacts (via N-terminus) with the gamma-tubulin ring complex component TUBGCP3. Interacts with gamma-tubulin. Isoform 4 does not interact with CEP170 or CEP250. Phosphorylated by AURKA/Aurora kinase A and PKA kinases but not CK2 or AURKB/Aurora kinase B. Widely expressed. Highly expressed in spleen, bone marrow and skin. Weakly expressed in liver and small intestine. Expressed in brain.

It localises to the cytoplasm. Its subcellular location is the cytoskeleton. It is found in the microtubule organizing center. The protein resides in the centrosome. The protein localises to the centriole. Functionally, centrosomal protein required for the positioning and anchorage of the microtubule minus-end in epithelial cells. May also act as a centrosome maturation factor. May play a role in microtubule nucleation, by recruiting the gamma-tubulin ring complex to the centrosome. Overexpression does not perturb nucleation or elongation of microtubules but suppresses release of microtubules. Required for centriole organization and microtubule anchoring at the mother centriole. The polypeptide is Ninein (Mus musculus (Mouse)).